The sequence spans 258 residues: NAD kinase (258 aa).

Asp51 serves as the catalytic Proton acceptor. NAD(+)-binding positions include 51–52, 119–120, Lys130, Asp149, 160–165, and Ala184; these read DG, ND, and TAYSLS.

Belongs to the NAD kinase family. As to quaternary structure, homodimer. Requires a divalent metal cation as cofactor.

Its subcellular location is the cytoplasm. It carries out the reaction NAD(+) + ATP = ADP + NADP(+) + H(+). Its function is as follows. Involved in the regulation of the intracellular balance between NAD(H) and NADP(H), and is a key enzyme in the biosynthesis of NADP. Catalyzes specifically the phosphorylation on 2'-hydroxyl of the adenosine moiety of NAD to yield NADP. The polypeptide is NAD kinase (NADK) (Thermotoga maritima (strain ATCC 43589 / DSM 3109 / JCM 10099 / NBRC 100826 / MSB8)).